The chain runs to 1393 residues: DNA-directed RNA polymerase subunit beta' (1393 aa).

Zn(2+) contacts are provided by Cys70, Cys72, Cys85, and Cys88. Positions 461, 463, and 465 each coordinate Mg(2+). Zn(2+) contacts are provided by Cys804, Cys877, Cys884, and Cys887.

Belongs to the RNA polymerase beta' chain family. The RNAP catalytic core consists of 2 alpha, 1 beta, 1 beta' and 1 omega subunit. When a sigma factor is associated with the core the holoenzyme is formed, which can initiate transcription. It depends on Mg(2+) as a cofactor. Zn(2+) serves as cofactor.

The enzyme catalyses RNA(n) + a ribonucleoside 5'-triphosphate = RNA(n+1) + diphosphate. In terms of biological role, DNA-dependent RNA polymerase catalyzes the transcription of DNA into RNA using the four ribonucleoside triphosphates as substrates. The polypeptide is DNA-directed RNA polymerase subunit beta' (Rhodospirillum rubrum (strain ATCC 11170 / ATH 1.1.1 / DSM 467 / LMG 4362 / NCIMB 8255 / S1)).